Reading from the N-terminus, the 239-residue chain is MPAPVSRAHTSALVLFSGGQDSTTCLAQALAKYERVETIAFDYGQRHKVELQARLNVLRELKSQFPQWAAKLGEDHLLDLAVLGQVSDCSLTRDVAFKMESSGLPNTFVPGRNLLFLTLAAALAYRRDLQVLVTGVCETDFSGYPDCRDDTMKAMQLALSLGMDKRFLIETPLMWIDKADTWALAESLGGQPLVELIIEHTHTCYLGDRIHRHAWGYGCGQCPACELRARGYARYAEAA.

Residue 16 to 26 (FSGGQDSTTCL) participates in ATP binding. Residues C204, C219, C222, and C225 each coordinate Zn(2+).

It belongs to the QueC family. Requires Zn(2+) as cofactor.

The enzyme catalyses 7-carboxy-7-deazaguanine + NH4(+) + ATP = 7-cyano-7-deazaguanine + ADP + phosphate + H2O + H(+). The protein operates within purine metabolism; 7-cyano-7-deazaguanine biosynthesis. Its function is as follows. Catalyzes the ATP-dependent conversion of 7-carboxy-7-deazaguanine (CDG) to 7-cyano-7-deazaguanine (preQ(0)). The sequence is that of 7-cyano-7-deazaguanine synthase from Polaromonas naphthalenivorans (strain CJ2).